A 373-amino-acid chain; its full sequence is 4-hydroxy-3-methylbut-2-en-1-yl diphosphate synthase (flavodoxin) (373 aa).

Cys270, Cys273, Cys305, and Glu312 together coordinate [4Fe-4S] cluster.

It belongs to the IspG family. [4Fe-4S] cluster is required as a cofactor.

It carries out the reaction (2E)-4-hydroxy-3-methylbut-2-enyl diphosphate + oxidized [flavodoxin] + H2O + 2 H(+) = 2-C-methyl-D-erythritol 2,4-cyclic diphosphate + reduced [flavodoxin]. It participates in isoprenoid biosynthesis; isopentenyl diphosphate biosynthesis via DXP pathway; isopentenyl diphosphate from 1-deoxy-D-xylulose 5-phosphate: step 5/6. In terms of biological role, converts 2C-methyl-D-erythritol 2,4-cyclodiphosphate (ME-2,4cPP) into 1-hydroxy-2-methyl-2-(E)-butenyl 4-diphosphate. The chain is 4-hydroxy-3-methylbut-2-en-1-yl diphosphate synthase (flavodoxin) from Proteus mirabilis (strain HI4320).